The sequence spans 520 residues: Peptide chain release factor 3 (520 aa).

Residues 8 to 277 (ESRKTFAIIS…FAPMPNARQT (270 aa)) form the tr-type G domain. GTP contacts are provided by residues 17–24 (SHPDAGKT), 85–89 (DTPGH), and 139–142 (NKLD).

The protein belongs to the TRAFAC class translation factor GTPase superfamily. Classic translation factor GTPase family. PrfC subfamily.

The protein localises to the cytoplasm. Increases the formation of ribosomal termination complexes and stimulates activities of RF-1 and RF-2. It binds guanine nucleotides and has strong preference for UGA stop codons. It may interact directly with the ribosome. The stimulation of RF-1 and RF-2 is significantly reduced by GTP and GDP, but not by GMP. This chain is Peptide chain release factor 3, found in Staphylococcus aureus (strain USA300 / TCH1516).